The primary structure comprises 465 residues: Ubiquitin carboxyl-terminal hydrolase UCH54 (465 aa).

The UCH catalytic domain maps to 11-333 (EWCLIESNPC…VRFNIIAVMK (323 aa)). The active-site Nucleophile is the C145. The active-site Proton donor is the H220. The disordered stretch occupies residues 244–293 (INADEQNKPNPNNNNNNKDNDNDNNNNNNNNNNNNNNNNNNNNNNNNNNI). Residues 251–292 (KPNPNNNNNNKDNDNDNNNNNNNNNNNNNNNNNNNNNNNNNN) show a composition bias toward low complexity. The ULD domain maps to 432–460 (NFYPFIMSSLNLMAKHKLLKDAYQKEKLK).

The protein belongs to the peptidase C12 family.

The catalysed reaction is Thiol-dependent hydrolysis of ester, thioester, amide, peptide and isopeptide bonds formed by the C-terminal Gly of ubiquitin (a 76-residue protein attached to proteins as an intracellular targeting signal).. In terms of biological role, thiol protease that recognizes and hydrolyzes a peptide bond at the C-terminal glycine of either ubiquitin or NEDD8. The polypeptide is Ubiquitin carboxyl-terminal hydrolase UCH54 (Plasmodium falciparum (isolate 3D7)).